Here is a 491-residue protein sequence, read N- to C-terminus: Lysine--tRNA ligase (491 aa).

Mg(2+) contacts are provided by Glu400 and Glu407.

The protein belongs to the class-II aminoacyl-tRNA synthetase family. Homodimer. It depends on Mg(2+) as a cofactor.

The protein localises to the cytoplasm. The enzyme catalyses tRNA(Lys) + L-lysine + ATP = L-lysyl-tRNA(Lys) + AMP + diphosphate. The sequence is that of Lysine--tRNA ligase from Mesomycoplasma hyopneumoniae (strain 7448) (Mycoplasma hyopneumoniae).